Consider the following 47-residue polypeptide: Large ribosomal subunit protein bL33 (47 aa).

This sequence belongs to the bacterial ribosomal protein bL33 family.

This Staphylococcus capitis protein is Large ribosomal subunit protein bL33.